We begin with the raw amino-acid sequence, 103 residues long: Small ribosomal subunit protein uS14c (103 aa).

Residues 27–56 (SKKKIRSKVSPLSLSEKTKMQEKLQSLPRN) are disordered.

The protein belongs to the universal ribosomal protein uS14 family. Part of the 30S ribosomal subunit.

Its subcellular location is the plastid. The protein resides in the chloroplast. Binds 16S rRNA, required for the assembly of 30S particles. The polypeptide is Small ribosomal subunit protein uS14c (Zea mays (Maize)).